Reading from the N-terminus, the 179-residue chain is uncharacterized protein (179 aa).

The segment at 160–179 (QPIEPNGTQPATETKTPVGV) is disordered. A compositionally biased stretch (polar residues) spans 165–179 (NGTQPATETKTPVGV).

Belongs to the Dps family.

This is an uncharacterized protein from Anabaena variabilis.